Reading from the N-terminus, the 298-residue chain is Probable endonuclease 4 (298 aa).

Zn(2+) is bound by residues His69, His111, Glu146, Asp180, His183, His215, Asp228, His230, and Glu260.

It belongs to the AP endonuclease 2 family. Zn(2+) serves as cofactor.

The catalysed reaction is Endonucleolytic cleavage to 5'-phosphooligonucleotide end-products.. Its function is as follows. Endonuclease IV plays a role in DNA repair. It cleaves phosphodiester bonds at apurinic or apyrimidinic (AP) sites, generating a 3'-hydroxyl group and a 5'-terminal sugar phosphate. The chain is Probable endonuclease 4 from Bacillus cytotoxicus (strain DSM 22905 / CIP 110041 / 391-98 / NVH 391-98).